Consider the following 191-residue polypeptide: Glutathione-dependent formaldehyde-activating enzyme (191 aa).

In terms of domain architecture, CENP-V/GFA spans 22–169 (FQGGTLECHC…LTELGLPPYD (148 aa)). 7 residues coordinate Zn(2+): Cys-29, Cys-31, Cys-50, Cys-52, Cys-55, Cys-97, and Cys-100.

This sequence belongs to the Gfa family. Zn(2+) is required as a cofactor.

The enzyme catalyses S-(hydroxymethyl)glutathione = glutathione + formaldehyde. Its pathway is one-carbon metabolism; formaldehyde degradation; formate from formaldehyde (glutathione route): step 1/3. In terms of biological role, catalyzes the condensation of formaldehyde and glutathione to S-hydroxymethylglutathione. The protein is Glutathione-dependent formaldehyde-activating enzyme of Xanthomonas axonopodis pv. citri (strain 306).